Consider the following 210-residue polypeptide: Protein-L-isoaspartate O-methyltransferase (210 aa).

The active site involves Ser-54.

This sequence belongs to the methyltransferase superfamily. L-isoaspartyl/D-aspartyl protein methyltransferase family.

It is found in the cytoplasm. It carries out the reaction [protein]-L-isoaspartate + S-adenosyl-L-methionine = [protein]-L-isoaspartate alpha-methyl ester + S-adenosyl-L-homocysteine. In terms of biological role, catalyzes the methyl esterification of L-isoaspartyl residues in peptides and proteins that result from spontaneous decomposition of normal L-aspartyl and L-asparaginyl residues. It plays a role in the repair and/or degradation of damaged proteins. In Methanothrix thermoacetophila (strain DSM 6194 / JCM 14653 / NBRC 101360 / PT) (Methanosaeta thermophila), this protein is Protein-L-isoaspartate O-methyltransferase.